A 387-amino-acid chain; its full sequence is Phosphoglycerate kinase (387 aa).

Substrate contacts are provided by residues 21–23 (DLN), Arg-36, 59–62 (HLGR), Arg-113, and Arg-146. Residues Lys-197, Glu-314, and 340–343 (GGDT) each bind ATP.

This sequence belongs to the phosphoglycerate kinase family. In terms of assembly, monomer.

Its subcellular location is the cytoplasm. It carries out the reaction (2R)-3-phosphoglycerate + ATP = (2R)-3-phospho-glyceroyl phosphate + ADP. It participates in carbohydrate degradation; glycolysis; pyruvate from D-glyceraldehyde 3-phosphate: step 2/5. The protein is Phosphoglycerate kinase of Enterobacter sp. (strain 638).